A 494-amino-acid polypeptide reads, in one-letter code: MASASGSPVRVRFCPSPTGNPHVGLVRTALFNWAFARHHQGTLVFRIEDTDAARDSEESYDQLLDSMRWLGFDWDEGPEVGGPHAPYRQSQRMDIYQDVAQKLLDAGHAYRCYCSQEELDTRREAARAAGKPSGYDGHCRELTDAQVEEYTSQGREPIVRFRMPDEAITFTDLVRGEITYLPENVPDYGIVRANGAPLYTLVNPVDDALMEITHVLRGEDLLSSTPRQIALYKALIELGVAKEIPAFGHLPYVMGEGNKKLSKRDPQSSLNLYRERGFLPEGLLNYLSLLGWSLSADQDIFTIEEMVAAFDVSDVQPNPARFDLKKCEAINGDHIRLLEVKDFTERCRPWLKAPVAPWAPEDFDEAKWQAIAPHAQTRLKVLSEITDNVDFLFLPEPVFDEASWTKAMKEGSDALLTTAREKLDAADWTSPEALKEAVLAAGEAHGLKLGKAQAPVRVAVTGRTVGLPLFESLEVLGKEKALARIDAALARLAA.

Residues 15 to 25 (PSPTGNPHVGL) carry the 'HIGH' region motif. Residues cysteine 112, cysteine 114, cysteine 139, and glutamate 141 each contribute to the Zn(2+) site. Residues 260–264 (KLSKR) carry the 'KMSKS' region motif. Residue lysine 263 coordinates ATP.

Belongs to the class-I aminoacyl-tRNA synthetase family. Glutamate--tRNA ligase type 1 subfamily. Monomer. Zn(2+) serves as cofactor.

Its subcellular location is the cytoplasm. The catalysed reaction is tRNA(Glu) + L-glutamate + ATP = L-glutamyl-tRNA(Glu) + AMP + diphosphate. In terms of biological role, catalyzes the attachment of glutamate to tRNA(Glu) in a two-step reaction: glutamate is first activated by ATP to form Glu-AMP and then transferred to the acceptor end of tRNA(Glu). This is Glutamate--tRNA ligase from Streptomyces coelicolor (strain ATCC BAA-471 / A3(2) / M145).